Reading from the N-terminus, the 406-residue chain is Imidazolonepropionase (406 aa).

His-72 and His-74 together coordinate Fe(3+). 2 residues coordinate Zn(2+): His-72 and His-74. 4-imidazolone-5-propanoate-binding residues include Arg-81, Tyr-144, and His-177. Tyr-144 is a binding site for N-formimidoyl-L-glutamate. Fe(3+) is bound at residue His-242. A Zn(2+)-binding site is contributed by His-242. Gln-245 lines the 4-imidazolone-5-propanoate pocket. A Fe(3+)-binding site is contributed by Asp-317. Position 317 (Asp-317) interacts with Zn(2+). The N-formimidoyl-L-glutamate site is built by Asn-319 and Gly-321. Thr-322 is a binding site for 4-imidazolone-5-propanoate.

This sequence belongs to the metallo-dependent hydrolases superfamily. HutI family. Requires Zn(2+) as cofactor. It depends on Fe(3+) as a cofactor.

Its subcellular location is the cytoplasm. The enzyme catalyses 4-imidazolone-5-propanoate + H2O = N-formimidoyl-L-glutamate. The protein operates within amino-acid degradation; L-histidine degradation into L-glutamate; N-formimidoyl-L-glutamate from L-histidine: step 3/3. Its function is as follows. Catalyzes the hydrolytic cleavage of the carbon-nitrogen bond in imidazolone-5-propanoate to yield N-formimidoyl-L-glutamate. It is the third step in the universal histidine degradation pathway. This Yersinia pseudotuberculosis serotype O:1b (strain IP 31758) protein is Imidazolonepropionase.